A 265-amino-acid polypeptide reads, in one-letter code: NAD kinase 1 (265 aa).

The active-site Proton acceptor is Asp45. NAD(+) is bound by residues 45–46, 122–123, Arg148, Asp150, and Ala185; these read DG and NE.

Belongs to the NAD kinase family. A divalent metal cation is required as a cofactor.

It localises to the cytoplasm. It carries out the reaction NAD(+) + ATP = ADP + NADP(+) + H(+). Functionally, involved in the regulation of the intracellular balance of NAD and NADP, and is a key enzyme in the biosynthesis of NADP. Catalyzes specifically the phosphorylation on 2'-hydroxyl of the adenosine moiety of NAD to yield NADP. The protein is NAD kinase 1 of Bacillus anthracis.